A 309-amino-acid polypeptide reads, in one-letter code: D-galacturonate reductase (309 aa).

Tyr-50 serves as the catalytic Proton donor. Residue His-109 participates in substrate binding. 210 to 264 (SPLGSTGSPLMSADPVVKIAEKKGISPTTVLLSYHVNRGSTVLAKSVTPARIKAN) is an NADP(+) binding site.

It belongs to the aldo/keto reductase family.

It catalyses the reaction L-galactonate + NADP(+) = aldehydo-D-galacturonate + NADPH + H(+). It participates in carbohydrate acid metabolism. Functionally, mediates the reduction of D-galacturonate to L-galactonate, the first step in D-galacturonate catabolic process. Also has activity with D-glucuronate and DL-glyceraldehyde. No activity is observed with D-glucose, D-fructose, D-xylose, D-galactose, L-arabinose or D-mannose. Activity is seen only with NADPH and not with NADH. The sequence is that of D-galacturonate reductase (gar1) from Hypocrea jecorina (Trichoderma reesei).